Reading from the N-terminus, the 269-residue chain is Phosphatidate cytidylyltransferase (269 aa).

The next 8 membrane-spanning stretches (helical) occupy residues 13–33, 50–70, 81–101, 110–130, 138–158, 180–200, 201–221, and 247–267; these read LAAIVFLFLVIVGKLPFTILI, LKLVSLPGLIGLLLLWMFLLP, ISKMEIALFAVLLLLTYTVLV, VGFITLAAIYIGMCFHYFIEI, LTYIFYACVVIWSTDSGAYFV, FAGGIVIALVLATIFQLVAQL, PIPYIYLLLITLFLSVFGQLG, and ILDRFDSFLFVMPFLYFLLAL.

This sequence belongs to the CDS family.

The protein localises to the cell membrane. It catalyses the reaction a 1,2-diacyl-sn-glycero-3-phosphate + CTP + H(+) = a CDP-1,2-diacyl-sn-glycerol + diphosphate. Its pathway is phospholipid metabolism; CDP-diacylglycerol biosynthesis; CDP-diacylglycerol from sn-glycerol 3-phosphate: step 3/3. The protein is Phosphatidate cytidylyltransferase (cdsA) of Bacillus subtilis (strain 168).